The primary structure comprises 344 residues: Holliday junction branch migration complex subunit RuvB (344 aa).

Positions 1–183 are large ATPase domain (RuvB-L); the sequence is MLDERLISSH…FGISCRLDFY (183 aa). ATP is bound by residues I22, R23, G64, K67, T68, T69, 130 to 132, R173, Y183, and R220; that span reads EDY. T68 contacts Mg(2+). The segment at 184–254 is small ATPAse domain (RuvB-S); it reads TPLELSEIIL…LAKWALEMLE (71 aa). The tract at residues 257–344 is head domain (RuvB-H); that stretch reads ECGLDVMDRM…LEGKGLFSDA (88 aa). The DNA site is built by K312 and R317.

The protein belongs to the RuvB family. As to quaternary structure, homohexamer. Forms an RuvA(8)-RuvB(12)-Holliday junction (HJ) complex. HJ DNA is sandwiched between 2 RuvA tetramers; dsDNA enters through RuvA and exits via RuvB. An RuvB hexamer assembles on each DNA strand where it exits the tetramer. Each RuvB hexamer is contacted by two RuvA subunits (via domain III) on 2 adjacent RuvB subunits; this complex drives branch migration. In the full resolvosome a probable DNA-RuvA(4)-RuvB(12)-RuvC(2) complex forms which resolves the HJ.

Its subcellular location is the cytoplasm. The enzyme catalyses ATP + H2O = ADP + phosphate + H(+). Functionally, the RuvA-RuvB-RuvC complex processes Holliday junction (HJ) DNA during genetic recombination and DNA repair, while the RuvA-RuvB complex plays an important role in the rescue of blocked DNA replication forks via replication fork reversal (RFR). RuvA specifically binds to HJ cruciform DNA, conferring on it an open structure. The RuvB hexamer acts as an ATP-dependent pump, pulling dsDNA into and through the RuvAB complex. RuvB forms 2 homohexamers on either side of HJ DNA bound by 1 or 2 RuvA tetramers; 4 subunits per hexamer contact DNA at a time. Coordinated motions by a converter formed by DNA-disengaged RuvB subunits stimulates ATP hydrolysis and nucleotide exchange. Immobilization of the converter enables RuvB to convert the ATP-contained energy into a lever motion, pulling 2 nucleotides of DNA out of the RuvA tetramer per ATP hydrolyzed, thus driving DNA branch migration. The RuvB motors rotate together with the DNA substrate, which together with the progressing nucleotide cycle form the mechanistic basis for DNA recombination by continuous HJ branch migration. Branch migration allows RuvC to scan DNA until it finds its consensus sequence, where it cleaves and resolves cruciform DNA. This Syntrophomonas wolfei subsp. wolfei (strain DSM 2245B / Goettingen) protein is Holliday junction branch migration complex subunit RuvB.